The primary structure comprises 96 residues: Dynein light chain roadblock-type 2 (96 aa).

At A2 the chain carries N-acetylalanine.

Belongs to the GAMAD family. In terms of assembly, homodimer. The cytoplasmic dynein 1 complex consists of two catalytic heavy chains (HCs) and a number of non-catalytic subunits presented by intermediate chains (ICs), light intermediate chains (LICs) and light chains (LCs); the composition seems to vary in respect to the IC, LIC and LC composition. The heavy chain homodimer serves as a scaffold for the probable homodimeric assembly of the respective non-catalytic subunits. The ICs and LICs bind directly to the HC dimer and the LCs assemble on the IC dimer. Interacts with DYNC1I1 and DYNC1I2. Self-associates. Interacts with DYNLRB1.

Its subcellular location is the cytoplasm. It is found in the cytoskeleton. Functionally, acts as one of several non-catalytic accessory components of the cytoplasmic dynein 1 complex that are thought to be involved in linking dynein to cargos and to adapter proteins that regulate dynein function. Cytoplasmic dynein 1 acts as a motor for the intracellular retrograde motility of vesicles and organelles along microtubules. This Bos taurus (Bovine) protein is Dynein light chain roadblock-type 2 (DYNLRB2).